A 423-amino-acid polypeptide reads, in one-letter code: D-tagatose-1,6-bisphosphate aldolase subunit GatZ (423 aa).

The protein belongs to the GatZ/KbaZ family. GatZ subfamily. In terms of assembly, forms a complex with GatY.

It participates in carbohydrate metabolism; D-tagatose 6-phosphate degradation; D-glyceraldehyde 3-phosphate and glycerone phosphate from D-tagatose 6-phosphate: step 2/2. Functionally, component of the tagatose-1,6-bisphosphate aldolase GatYZ that is required for full activity and stability of the Y subunit. Could have a chaperone-like function for the proper and stable folding of GatY. When expressed alone, GatZ does not show any aldolase activity. Is involved in the catabolism of galactitol. This is D-tagatose-1,6-bisphosphate aldolase subunit GatZ from Salmonella choleraesuis (strain SC-B67).